The primary structure comprises 141 residues: Hemoglobin subunit alpha-D (141 aa).

A Globin domain is found at 1–141 (MLTADDKKLI…VASVLAEKYR (141 aa)). Residues H58 and H87 each coordinate heme b.

The protein belongs to the globin family. In terms of assembly, heterotetramer of two alpha-D chains and two beta chains. In terms of tissue distribution, red blood cells.

Involved in oxygen transport from the lung to the various peripheral tissues. This Rhea americana (Greater rhea) protein is Hemoglobin subunit alpha-D (HBAD).